Reading from the N-terminus, the 845-residue chain is Translation initiation factor IF-2 (845 aa).

The tract at residues 1 to 260 is disordered; it reads MSDEQDKPTL…HMTSSGPREK (260 aa). Pro residues predominate over residues 68–81; the sequence is APAPAPAAPRPAAP. The span at 101-140 shows a compositional bias: basic and acidic residues; sequence REAEEARMAALEENRRREEAERARAAEEERARAEKREEQA. 2 stretches are compositionally biased toward low complexity: residues 141 to 166 and 173 to 191; these read ATKA…APPA and TAAR…RFTP. Residues 194–215 show a composition bias toward basic and acidic residues; sequence ALKRPEPKRPEPKASRGGENRR. A tr-type G domain is found at 344-514; sequence PRAPVVTIMG…ALQAEIMELK (171 aa). The G1 stretch occupies residues 353–360; the sequence is GHVDHGKT. 353–360 serves as a coordination point for GTP; it reads GHVDHGKT. A G2 region spans residues 378–382; that stretch reads GITQH. The G3 stretch occupies residues 400-403; sequence DTPG. GTP-binding positions include 400–404 and 454–457; these read DTPGH and NKVD. A G4 region spans residues 454-457; sequence NKVD. Positions 490–492 are G5; it reads SAL.

It belongs to the TRAFAC class translation factor GTPase superfamily. Classic translation factor GTPase family. IF-2 subfamily.

It localises to the cytoplasm. Its function is as follows. One of the essential components for the initiation of protein synthesis. Protects formylmethionyl-tRNA from spontaneous hydrolysis and promotes its binding to the 30S ribosomal subunits. Also involved in the hydrolysis of GTP during the formation of the 70S ribosomal complex. This chain is Translation initiation factor IF-2, found in Sphingopyxis alaskensis (strain DSM 13593 / LMG 18877 / RB2256) (Sphingomonas alaskensis).